The following is a 126-amino-acid chain: METMGRHVISELWGCDFDKLNDMDFIEKTFVNAALKSGAEVREVAFHKFAPQGVSGVVIISESHLTIHSFPEHGYASIDVYTCGDLDPNVAADYIADALHADTRENIEIPRGMGPVQIKQAQAKVL.

Catalysis depends on S63, which acts as the Schiff-base intermediate with substrate; via pyruvic acid. S63 carries the pyruvic acid (Ser); by autocatalysis modification. H68 functions as the Proton acceptor; for processing activity in the catalytic mechanism. Residue C83 is the Proton donor; for catalytic activity of the active site.

The protein belongs to the prokaryotic AdoMetDC family. Type 1 subfamily. Heterotetramer of two alpha and two beta chains arranged as a dimer of alpha/beta heterodimers. The cofactor is pyruvate. Is synthesized initially as an inactive proenzyme. Formation of the active enzyme involves a self-maturation process in which the active site pyruvoyl group is generated from an internal serine residue via an autocatalytic post-translational modification. Two non-identical subunits are generated from the proenzyme in this reaction, and the pyruvate is formed at the N-terminus of the alpha chain, which is derived from the carboxyl end of the proenzyme. The post-translation cleavage follows an unusual pathway, termed non-hydrolytic serinolysis, in which the side chain hydroxyl group of the serine supplies its oxygen atom to form the C-terminus of the beta chain, while the remainder of the serine residue undergoes an oxidative deamination to produce ammonia and the pyruvoyl group blocking the N-terminus of the alpha chain.

The catalysed reaction is S-adenosyl-L-methionine + H(+) = S-adenosyl 3-(methylsulfanyl)propylamine + CO2. The protein operates within amine and polyamine biosynthesis; S-adenosylmethioninamine biosynthesis; S-adenosylmethioninamine from S-adenosyl-L-methionine: step 1/1. Catalyzes the decarboxylation of S-adenosylmethionine to S-adenosylmethioninamine (dcAdoMet), the propylamine donor required for the synthesis of the polyamines spermine and spermidine from the diamine putrescine. In Bacillus velezensis (strain DSM 23117 / BGSC 10A6 / LMG 26770 / FZB42) (Bacillus amyloliquefaciens subsp. plantarum), this protein is S-adenosylmethionine decarboxylase proenzyme.